We begin with the raw amino-acid sequence, 403 residues long: Argininosuccinate synthase (403 aa).

ATP is bound by residues 10–18 (AYSGGVDTS) and Ala-38. Tyr-89 is an L-citrulline binding site. ATP is bound at residue Gly-119. L-aspartate-binding residues include Thr-121, Asn-125, and Asp-126. Residue Asn-125 participates in L-citrulline binding. Positions 129, 177, 186, 262, and 274 each coordinate L-citrulline.

This sequence belongs to the argininosuccinate synthase family. Type 1 subfamily. Homotetramer.

It localises to the cytoplasm. The catalysed reaction is L-citrulline + L-aspartate + ATP = 2-(N(omega)-L-arginino)succinate + AMP + diphosphate + H(+). Its pathway is amino-acid biosynthesis; L-arginine biosynthesis; L-arginine from L-ornithine and carbamoyl phosphate: step 2/3. This Synechococcus sp. (strain CC9902) protein is Argininosuccinate synthase.